Consider the following 427-residue polypeptide: Serine--tRNA ligase (427 aa).

233-235 (TAE) contributes to the L-serine binding site. Residue 264-266 (RSE) coordinates ATP. An L-serine-binding site is contributed by Glu287. Residue 351-354 (EISS) coordinates ATP. Position 387 (Ser387) interacts with L-serine.

This sequence belongs to the class-II aminoacyl-tRNA synthetase family. Type-1 seryl-tRNA synthetase subfamily. In terms of assembly, homodimer. The tRNA molecule binds across the dimer.

The protein resides in the cytoplasm. The enzyme catalyses tRNA(Ser) + L-serine + ATP = L-seryl-tRNA(Ser) + AMP + diphosphate + H(+). The catalysed reaction is tRNA(Sec) + L-serine + ATP = L-seryl-tRNA(Sec) + AMP + diphosphate + H(+). It functions in the pathway aminoacyl-tRNA biosynthesis; selenocysteinyl-tRNA(Sec) biosynthesis; L-seryl-tRNA(Sec) from L-serine and tRNA(Sec): step 1/1. Functionally, catalyzes the attachment of serine to tRNA(Ser). Is also able to aminoacylate tRNA(Sec) with serine, to form the misacylated tRNA L-seryl-tRNA(Sec), which will be further converted into selenocysteinyl-tRNA(Sec). The sequence is that of Serine--tRNA ligase from Buchnera aphidicola subsp. Schizaphis graminum (strain Sg).